Here is a 249-residue protein sequence, read N- to C-terminus: Cell surface glycoprotein CD200 receptor 2 (249 aa).

The signal sequence occupies residues 1-24 (MHALGRTPALTLLIFIYNFVSVYT). Positions 25–124 (IVSVQMGTKA…GNFHKVYDLQ (100 aa)) constitute an Ig-like V-type domain. At 25–220 (IVSVQMGTKA…TTSTTPSLLT (196 aa)) the chain is on the extracellular side. Cys-38 and Cys-108 form a disulfide bridge. Residues Asn-73, Asn-138, and Asn-171 are each glycosylated (N-linked (GlcNAc...) asparagine). Residues 113-208 (PEGNFHKVYD…GNQSLSIELS (96 aa)) form the Ig-like C2-type domain. A disulfide bridge links Cys-143 with Cys-192. Residues 221 to 241 (ILYVKMVLLGIILLKVGFAFF) form a helical membrane-spanning segment. Residues 242–249 (QKRNVTRT) are Cytoplasmic-facing.

It belongs to the CD200R family. Expressed in bone marrow, spleen, brain, lung, testis and thymus.

The protein localises to the membrane. Its function is as follows. According to PubMed:15187158 it is a receptor for the CD200 cell surface glycoprotein. According to PubMed:16081818 it is not a receptor for the CD200/OX2 cell surface glycoprotein. Involved in the recruitment or surface expression of the TYROBP receptor. The chain is Cell surface glycoprotein CD200 receptor 2 (Cd200r1l) from Mus musculus (Mouse).